The sequence spans 199 residues: N-(5'-phosphoribosyl)anthranilate isomerase (199 aa).

This sequence belongs to the TrpF family.

The enzyme catalyses N-(5-phospho-beta-D-ribosyl)anthranilate = 1-(2-carboxyphenylamino)-1-deoxy-D-ribulose 5-phosphate. Its pathway is amino-acid biosynthesis; L-tryptophan biosynthesis; L-tryptophan from chorismate: step 3/5. The protein is N-(5'-phosphoribosyl)anthranilate isomerase of Sulfolobus acidocaldarius (strain ATCC 33909 / DSM 639 / JCM 8929 / NBRC 15157 / NCIMB 11770).